Here is a 439-residue protein sequence, read N- to C-terminus: L-cysteine:1D-myo-inositol 2-amino-2-deoxy-alpha-D-glucopyranoside ligase 2 (439 aa).

Zn(2+) is bound at residue Cys60. Residues 60–63 (CGIT), Thr75, and 98–100 (NVT) contribute to the L-cysteinyl-5'-AMP site. Residues 62–72 (ITPYDSTHLGH) carry the 'HIGH' region motif. Residues 203–208 (ERGGDP) carry the 'ERGGDP' region motif. Trp243 contributes to the L-cysteinyl-5'-AMP binding site. Cys247 is a Zn(2+) binding site. 265 to 267 (GVD) contacts L-cysteinyl-5'-AMP. A Zn(2+)-binding site is contributed by His272. Position 299 (Ile299) interacts with L-cysteinyl-5'-AMP. The 'KMSKS' region motif lies at 305 to 309 (KMSKS).

This sequence belongs to the class-I aminoacyl-tRNA synthetase family. MshC subfamily. In terms of assembly, monomer. The cofactor is Zn(2+).

The enzyme catalyses 1D-myo-inositol 2-amino-2-deoxy-alpha-D-glucopyranoside + L-cysteine + ATP = 1D-myo-inositol 2-(L-cysteinylamino)-2-deoxy-alpha-D-glucopyranoside + AMP + diphosphate + H(+). In terms of biological role, catalyzes the ATP-dependent condensation of GlcN-Ins and L-cysteine to form L-Cys-GlcN-Ins. The sequence is that of L-cysteine:1D-myo-inositol 2-amino-2-deoxy-alpha-D-glucopyranoside ligase 2 from Corynebacterium urealyticum (strain ATCC 43042 / DSM 7109).